A 104-amino-acid polypeptide reads, in one-letter code: Acetylcholine receptor subunit alpha (104 aa).

Residues 1 to 104 are Extracellular-facing; the sequence is NPPAIFKSYC…YFIVNVIIPC (104 aa). 2 disulfide bridges follow: C10–C24 and C74–C75. A glycan (N-linked (GlcNAc...) asparagine) is linked at N23.

This sequence belongs to the ligand-gated ion channel (TC 1.A.9) family. Acetylcholine receptor (TC 1.A.9.1) subfamily. Alpha-1/CHRNA1 sub-subfamily. One of the alpha chains that assemble within the acetylcholine receptor, a pentamer of two alpha chains, a beta, a delta, and a gamma or epsilon chains.

The protein localises to the postsynaptic cell membrane. Its subcellular location is the cell membrane. The enzyme catalyses K(+)(in) = K(+)(out). The catalysed reaction is Na(+)(in) = Na(+)(out). In terms of biological role, upon acetylcholine binding, the AChR responds by an extensive change in conformation that affects all subunits and leads to opening of an ion-conducting channel across the plasma membrane. The chain is Acetylcholine receptor subunit alpha (CHRNA1) from Naja naja (Indian cobra).